A 212-amino-acid chain; its full sequence is 2-dehydro-3-deoxy-phosphogluconate aldolase (212 aa).

The Proton acceptor role is filled by Glu45. Positions 49, 73, and 133 each coordinate pyruvate. Residue Lys133 is the Schiff-base intermediate with substrate of the active site.

The protein belongs to the KHG/KDPG aldolase family. Homotrimer.

Its subcellular location is the cytoplasm. The enzyme catalyses 2-dehydro-3-deoxy-6-phospho-D-gluconate = D-glyceraldehyde 3-phosphate + pyruvate. It participates in carbohydrate acid metabolism; 2-dehydro-3-deoxy-D-gluconate degradation; D-glyceraldehyde 3-phosphate and pyruvate from 2-dehydro-3-deoxy-D-gluconate: step 2/2. In terms of biological role, involved in the degradation of glucose via the Entner-Doudoroff pathway. Catalyzes the reversible, stereospecific retro-aldol cleavage of 2-keto-3-deoxy-6-phosphogluconate (KDPG) to pyruvate and D-glyceraldehyde-3-phosphate. This is 2-dehydro-3-deoxy-phosphogluconate aldolase (eda) from Haemophilus influenzae (strain ATCC 51907 / DSM 11121 / KW20 / Rd).